A 678-amino-acid chain; its full sequence is Endoplasmic reticulum membrane-associated RNA degradation protein (678 aa).

The next 2 helical transmembrane spans lie at leucine 390–phenylalanine 410 and valine 587–glycine 607.

The protein localises to the endoplasmic reticulum membrane. In terms of biological role, may play a role in neuronal migration during embryonic development. The polypeptide is Endoplasmic reticulum membrane-associated RNA degradation protein (ERMARD) (Homo sapiens (Human)).